The primary structure comprises 289 residues: HTH-type transcriptional regulator HexR (289 aa).

The 77-residue stretch at 1 to 77 folds into the HTH rpiR-type domain; sequence MNMLEKIQSQ…LHLAQSLANG (77 aa). The H-T-H motif DNA-binding region spans 37–56; the sequence is IAAMALEANVSEPTVNRFCR. An SIS domain is found at 121–260; it reads AVDLLTQAKK…ATGFTLRRGA (140 aa).

In terms of biological role, represses the expression of the hex regulon (zwf, eda, glp and gap). The chain is HTH-type transcriptional regulator HexR (hexR) from Escherichia coli (strain K12).